We begin with the raw amino-acid sequence, 386 residues long: Acetate kinase (386 aa).

Residue asparagine 7 participates in Mg(2+) binding. Lysine 14 lines the ATP pocket. Arginine 78 lines the substrate pocket. The Proton donor/acceptor role is filled by aspartate 135. ATP is bound by residues 195–199, 268–270, and 316–320; these read HLGNG, DMR, and GIGEN. Glutamate 370 lines the Mg(2+) pocket.

It belongs to the acetokinase family. Homodimer. The cofactor is Mg(2+). Mn(2+) serves as cofactor.

It is found in the cytoplasm. The enzyme catalyses acetate + ATP = acetyl phosphate + ADP. It functions in the pathway metabolic intermediate biosynthesis; acetyl-CoA biosynthesis; acetyl-CoA from acetate: step 1/2. Functionally, catalyzes the formation of acetyl phosphate from acetate and ATP. Can also catalyze the reverse reaction. The polypeptide is Acetate kinase (Pseudarthrobacter chlorophenolicus (strain ATCC 700700 / DSM 12829 / CIP 107037 / JCM 12360 / KCTC 9906 / NCIMB 13794 / A6) (Arthrobacter chlorophenolicus)).